A 406-amino-acid polypeptide reads, in one-letter code: Tryptophan 2,3-dioxygenase (406 aa).

Substrate contacts are provided by residues 72-76 (FIVTH) and Arg-144. His-328 contributes to the heme binding site. Thr-342 provides a ligand contact to substrate.

Belongs to the tryptophan 2,3-dioxygenase family. As to quaternary structure, homotetramer. Dimer of dimers. The cofactor is heme.

It carries out the reaction L-tryptophan + O2 = N-formyl-L-kynurenine. The protein operates within amino-acid degradation; L-tryptophan degradation via kynurenine pathway; L-kynurenine from L-tryptophan: step 1/2. Its function is as follows. Heme-dependent dioxygenase that catalyzes the oxidative cleavage of the L-tryptophan (L-Trp) pyrrole ring and converts L-tryptophan to N-formyl-L-kynurenine. Catalyzes the oxidative cleavage of the indole moiety. The protein is Tryptophan 2,3-dioxygenase of Xenopus tropicalis (Western clawed frog).